The following is a 277-amino-acid chain: Thymidylate synthase (277 aa).

Arginine 27 contacts dUMP. Histidine 57 is a binding site for (6R)-5,10-methylene-5,6,7,8-tetrahydrofolate. DUMP is bound at residue 132–133 (RR). Cysteine 152 functions as the Nucleophile in the catalytic mechanism. DUMP-binding positions include 179-182 (RSAD), asparagine 190, and 220-222 (HIY). (6R)-5,10-methylene-5,6,7,8-tetrahydrofolate is bound at residue aspartate 182. Position 276 (alanine 276) interacts with (6R)-5,10-methylene-5,6,7,8-tetrahydrofolate.

The protein belongs to the thymidylate synthase family. Bacterial-type ThyA subfamily. Homodimer.

It localises to the cytoplasm. It carries out the reaction dUMP + (6R)-5,10-methylene-5,6,7,8-tetrahydrofolate = 7,8-dihydrofolate + dTMP. Its pathway is pyrimidine metabolism; dTTP biosynthesis. Functionally, catalyzes the reductive methylation of 2'-deoxyuridine-5'-monophosphate (dUMP) to 2'-deoxythymidine-5'-monophosphate (dTMP) while utilizing 5,10-methylenetetrahydrofolate (mTHF) as the methyl donor and reductant in the reaction, yielding dihydrofolate (DHF) as a by-product. This enzymatic reaction provides an intracellular de novo source of dTMP, an essential precursor for DNA biosynthesis. The chain is Thymidylate synthase from Acidovorax sp. (strain JS42).